The sequence spans 268 residues: L-proline trans-4-hydroxylase (268 aa).

The Fe cation site is built by His-113, Asp-115, and His-218.

This sequence belongs to the PhyH family. As to quaternary structure, monomer. It depends on Fe(2+) as a cofactor.

The catalysed reaction is L-proline + 2-oxoglutarate + O2 = trans-4-hydroxy-L-proline + succinate + CO2. It functions in the pathway antibiotic biosynthesis. Competitively inhibited by pyridine-2,4-dicarboxylate. Inhibited by diethyl pyrocarbonate (DEPC), 3,4-dihydroxybenzoate, pyridine-2,5-dicarboxylate, alpha,alpha'-dipyridyl, and some metal ions such as Co(2+) and Zn(2+). Involved in the biosynthesis of the peptidolactone antibiotic etamycin (viridogrisein). Catalyzes the hydroxylation of free L-proline at the C-4 position to yield trans-4-hydroxy-L-proline. The protein is L-proline trans-4-hydroxylase of Streptomyces griseoviridis.